We begin with the raw amino-acid sequence, 89 residues long: Barrier-to-autointegration factor (89 aa).

An N-acetylmethionine modification is found at Met-1. Residue Thr-2 is modified to N-acetylthreonine; in Barrier-to-autointegration factor, N-terminally processed. Residues Thr-2 and Thr-3 each carry the phosphothreonine; by VRK1 and VRK2 modification. Ser-4 is subject to Phosphoserine; by VRK1 and VRK2. The HhH domain maps to 20–35 (VGSLAGIGEVLGKKLE).

The protein belongs to the BAF family. In terms of assembly, homodimer. Heterodimerizes with BANF2. Interacts with ANKLE2/LEM4, leading to decreased phosphorylation by VRK1 and promoting dephosphorylation by protein phosphatase 2A (PP2A). Binds non-specifically to double-stranded DNA, and is found as a hexamer or dodecamer upon DNA binding. Binds to LEM domain-containing nuclear proteins such as LEMD3/MAN1, TMPO/LAP2 and EMD (emerin). Interacts with ANKLE1 (via LEM domain); the interaction may favor BANF1 dimerization. Interacts with CRX and LMNA (lamin-A). Binds linker histone H1.1 and core histones H3. Interacts with LEMD2 (via LEM domain). Interacts with PARP1; interaction takes place in response to oxidative DNA damage. In terms of processing, ser-4 is the major site of phosphorylation as compared to Thr-2 and Thr-3. Phosphorylation on Thr-2; Thr-3 and Ser-4 disrupts its ability to bind DNA and reduces its ability to bind LEM domain-containing proteins. Non phosphorylated BAF seems to enhance binding between EMD and LMNA. Dephosphorylated by protein phosphatase 2A (PP2A) following interaction with ANKLE2/LEM4 during mitotic exit, leading to mitotic nuclear envelope reassembly.

Its subcellular location is the nucleus. It is found in the chromosome. It localises to the nucleus envelope. The protein localises to the cytoplasm. Functionally, non-specific DNA-binding protein that plays key roles in mitotic nuclear reassembly, chromatin organization, DNA damage response, gene expression and intrinsic immunity against foreign DNA. Contains two non-specific double-stranded DNA (dsDNA)-binding sites which promote DNA cross-bridging. Plays a key role in nuclear membrane reformation at the end of mitosis by driving formation of a single nucleus in a spindle-independent manner. Transiently cross-bridges anaphase chromosomes via its ability to bridge distant DNA sites, leading to the formation of a dense chromatin network at the chromosome ensemble surface that limits membranes to the surface. Also acts as a negative regulator of innate immune activation by restricting CGAS activity toward self-DNA upon acute loss of nuclear membrane integrity. Outcompetes CGAS for DNA-binding, thereby preventing CGAS activation and subsequent damaging autoinflammatory responses. Also involved in DNA damage response: interacts with PARP1 in response to oxidative stress, thereby inhibiting the ADP-ribosyltransferase activity of PARP1. Involved in the recognition of exogenous dsDNA in the cytosol: associates with exogenous dsDNA immediately after its appearance in the cytosol at endosome breakdown and is required to avoid autophagy. In case of poxvirus infection, has an antiviral activity by blocking viral DNA replication. The chain is Barrier-to-autointegration factor (BANF1) from Bos taurus (Bovine).